The sequence spans 288 residues: Bifunctional protein FolD 2 (288 aa).

Residues 166 to 168 (GRS) and Ser-191 contribute to the NADP(+) site.

This sequence belongs to the tetrahydrofolate dehydrogenase/cyclohydrolase family. In terms of assembly, homodimer.

It carries out the reaction (6R)-5,10-methylene-5,6,7,8-tetrahydrofolate + NADP(+) = (6R)-5,10-methenyltetrahydrofolate + NADPH. It catalyses the reaction (6R)-5,10-methenyltetrahydrofolate + H2O = (6R)-10-formyltetrahydrofolate + H(+). The protein operates within one-carbon metabolism; tetrahydrofolate interconversion. Catalyzes the oxidation of 5,10-methylenetetrahydrofolate to 5,10-methenyltetrahydrofolate and then the hydrolysis of 5,10-methenyltetrahydrofolate to 10-formyltetrahydrofolate. The protein is Bifunctional protein FolD 2 of Myxococcus xanthus (strain DK1622).